Consider the following 369-residue polypeptide: Flagellar P-ring protein (369 aa).

The N-terminal stretch at 1–22 (MIKLKQLIAATLLLSTAFGVHA) is a signal peptide.

Belongs to the FlgI family. The basal body constitutes a major portion of the flagellar organelle and consists of four rings (L,P,S, and M) mounted on a central rod.

Its subcellular location is the periplasm. It is found in the bacterial flagellum basal body. In terms of biological role, assembles around the rod to form the L-ring and probably protects the motor/basal body from shearing forces during rotation. The polypeptide is Flagellar P-ring protein (Pseudomonas savastanoi pv. phaseolicola (strain 1448A / Race 6) (Pseudomonas syringae pv. phaseolicola (strain 1448A / Race 6))).